The primary structure comprises 300 residues: Urease accessory protein UreD (300 aa).

It belongs to the UreD family. UreD, UreF and UreG form a complex that acts as a GTP-hydrolysis-dependent molecular chaperone, activating the urease apoprotein by helping to assemble the nickel containing metallocenter of UreC. The UreE protein probably delivers the nickel.

Its subcellular location is the cytoplasm. In terms of biological role, required for maturation of urease via the functional incorporation of the urease nickel metallocenter. The protein is Urease accessory protein UreD of Prochlorococcus marinus (strain AS9601).